We begin with the raw amino-acid sequence, 233 residues long: Orotidine 5'-phosphate decarboxylase (233 aa).

Substrate contacts are provided by residues D10, K32, 59–68 (DLKFHDIPNT), T119, R180, Q189, G209, and R210. K61 functions as the Proton donor in the catalytic mechanism.

This sequence belongs to the OMP decarboxylase family. Type 1 subfamily. As to quaternary structure, homodimer.

It carries out the reaction orotidine 5'-phosphate + H(+) = UMP + CO2. It participates in pyrimidine metabolism; UMP biosynthesis via de novo pathway; UMP from orotate: step 2/2. In terms of biological role, catalyzes the decarboxylation of orotidine 5'-monophosphate (OMP) to uridine 5'-monophosphate (UMP). In Pasteurella multocida (strain Pm70), this protein is Orotidine 5'-phosphate decarboxylase.